The primary structure comprises 272 residues: Shikimate dehydrogenase (NADP(+)) (272 aa).

Residues 14–16 (SKS) and threonine 61 each bind shikimate. Lysine 65 (proton acceptor) is an active-site residue. Position 77 (glutamate 77) interacts with NADP(+). 2 residues coordinate shikimate: asparagine 86 and aspartate 102. NADP(+) is bound by residues 126–130 (GAGGA), 149–154 (NRTYSR), and methionine 213. Tyrosine 215 provides a ligand contact to shikimate. Position 237 (glycine 237) interacts with NADP(+).

Belongs to the shikimate dehydrogenase family. As to quaternary structure, homodimer.

The catalysed reaction is shikimate + NADP(+) = 3-dehydroshikimate + NADPH + H(+). The protein operates within metabolic intermediate biosynthesis; chorismate biosynthesis; chorismate from D-erythrose 4-phosphate and phosphoenolpyruvate: step 4/7. In terms of biological role, involved in the biosynthesis of the chorismate, which leads to the biosynthesis of aromatic amino acids. Catalyzes the reversible NADPH linked reduction of 3-dehydroshikimate (DHSA) to yield shikimate (SA). This chain is Shikimate dehydrogenase (NADP(+)), found in Enterobacter sp. (strain 638).